We begin with the raw amino-acid sequence, 482 residues long: 2-succinylbenzoate--CoA ligase (482 aa).

Belongs to the ATP-dependent AMP-binding enzyme family. MenE subfamily.

The catalysed reaction is 2-succinylbenzoate + ATP + CoA = 2-succinylbenzoyl-CoA + AMP + diphosphate. Its pathway is quinol/quinone metabolism; 1,4-dihydroxy-2-naphthoate biosynthesis; 1,4-dihydroxy-2-naphthoate from chorismate: step 5/7. It functions in the pathway quinol/quinone metabolism; menaquinone biosynthesis. In terms of biological role, converts 2-succinylbenzoate (OSB) to 2-succinylbenzoyl-CoA (OSB-CoA). The sequence is that of 2-succinylbenzoate--CoA ligase from Bacillus cereus (strain AH820).